The sequence spans 124 residues: Large ribosomal subunit protein mL51 (124 aa).

Residues 1–31 (MSVFGGLWRSAVNLCQSSRLFSTGSCARIRM) constitute a mitochondrion transit peptide.

This sequence belongs to the mitochondrion-specific ribosomal protein mL51 family. As to quaternary structure, component of the mitochondrial ribosome large subunit (39S) which comprises a 16S rRNA and about 50 distinct proteins.

The protein localises to the mitochondrion. This Danio rerio (Zebrafish) protein is Large ribosomal subunit protein mL51 (mrpl51).